Consider the following 240-residue polypeptide: uncharacterized protein (240 aa).

Residues 1–85 (MSGFIKSTLL…LCGCCCWTNT (85 aa)) are Cytoplasmic-facing. A helical membrane pass occupies residues 86–106 (IGWAPLLALLPVIGPLLMYWV). Topologically, residues 107-131 (HDKLIELADDRYKLPAEIKVKMHGN) are extracellular. The chain crosses the membrane as a helical span at residues 132 to 152 (IVIDLLISLVPILGSVFAWLH). Residues 153–240 (ACSTRNAAIV…TNGRPQRGYR (88 aa)) are Cytoplasmic-facing. Residues 181–240 (QKEENEKHSNANTAPPVVGGNKNVNGNRNNSKMYNRPPVTAPPAPAYTRSTNGRPQRGYR) form a disordered region. Residues 197–210 (VVGGNKNVNGNRNN) are compositionally biased toward low complexity.

It is found in the membrane. This is an uncharacterized protein from Saccharomyces cerevisiae (strain ATCC 204508 / S288c) (Baker's yeast).